The primary structure comprises 488 residues: Glutamate synthase [NADPH] small chain (488 aa).

One can recognise a 4Fe-4S ferredoxin-type domain in the interval 38–69 (ESLRQQATRCMDCGIPFCHNGCPLGNLIPEWN).

It depends on [4Fe-4S] cluster as a cofactor.

The enzyme catalyses 2 L-glutamate + NADP(+) = L-glutamine + 2-oxoglutarate + NADPH + H(+). Its pathway is amino-acid biosynthesis; L-glutamate biosynthesis via GLT pathway; L-glutamate from 2-oxoglutarate and L-glutamine (NADP(+) route): step 1/1. This Mycobacterium tuberculosis (strain CDC 1551 / Oshkosh) protein is Glutamate synthase [NADPH] small chain (gltD).